A 1392-amino-acid chain; its full sequence is DNA-directed RNA polymerase subunit beta' (1392 aa).

Positions 70, 72, 85, and 88 each coordinate Zn(2+). Mg(2+) contacts are provided by D460, D462, and D464. The Zn(2+) site is built by C810, C884, C891, and C894.

The protein belongs to the RNA polymerase beta' chain family. As to quaternary structure, the RNAP catalytic core consists of 2 alpha, 1 beta, 1 beta' and 1 omega subunit. When a sigma factor is associated with the core the holoenzyme is formed, which can initiate transcription. It depends on Mg(2+) as a cofactor. Requires Zn(2+) as cofactor.

It catalyses the reaction RNA(n) + a ribonucleoside 5'-triphosphate = RNA(n+1) + diphosphate. DNA-dependent RNA polymerase catalyzes the transcription of DNA into RNA using the four ribonucleoside triphosphates as substrates. The chain is DNA-directed RNA polymerase subunit beta' from Geobacter metallireducens (strain ATCC 53774 / DSM 7210 / GS-15).